A 518-amino-acid polypeptide reads, in one-letter code: ATPase expression protein 2, mitochondrial (518 aa).

A mitochondrion-targeting transit peptide spans 1-15; the sequence is MLKKSRVLGKIPIPY.

This sequence belongs to the AEP2 family. Binds to the 5'UTR of the OLI1 mRNA.

The protein resides in the mitochondrion. Required for translation of the mitochondrial OLI1 transcript coding for the mitochondrial ATP synthase subunit 9. This is ATPase expression protein 2, mitochondrial (AEP2) from Kluyveromyces lactis (strain ATCC 8585 / CBS 2359 / DSM 70799 / NBRC 1267 / NRRL Y-1140 / WM37) (Yeast).